Reading from the N-terminus, the 211-residue chain is Protein N-terminal glutamine amidohydrolase (211 aa).

Residues C24, H78, and D94 contribute to the active site.

This sequence belongs to the NTAQ1 family. Monomer.

The catalysed reaction is N-terminal L-glutaminyl-[protein] + H2O = N-terminal L-glutamyl-[protein] + NH4(+). In terms of biological role, mediates the side-chain deamidation of N-terminal glutamine residues to glutamate, an important step in N-end rule pathway of protein degradation. Conversion of the resulting N-terminal glutamine to glutamate renders the protein susceptible to arginylation, polyubiquitination and degradation as specified by the N-end rule. Does not act on substrates with internal or C-terminal glutamine and does not act on non-glutamine residues in any position. The chain is Protein N-terminal glutamine amidohydrolase (tun) from Anopheles gambiae (African malaria mosquito).